The primary structure comprises 181 residues: Inner membrane-spanning protein YciB (181 aa).

Transmembrane regions (helical) follow at residues 10-30 (LIIFFAVYKFFDIYVASGALI), 50-70 (MHLITFVMVTVFGSLTLILHD), 72-92 (SFIKWKVTIVYALFAIALGVS), 118-138 (VTWYWVSFFVVCGLVNIYVAF), and 148-168 (FKVFGLTALTLINTVLTVLYL).

This sequence belongs to the YciB family.

It localises to the cell inner membrane. In terms of biological role, plays a role in cell envelope biogenesis, maintenance of cell envelope integrity and membrane homeostasis. The chain is Inner membrane-spanning protein YciB from Shewanella halifaxensis (strain HAW-EB4).